The chain runs to 341 residues: UDP-N-acetylenolpyruvoylglucosamine reductase (341 aa).

Residues 15–185 (LAQSCADLVE…TAVGLRLVKR (171 aa)) form the FAD-binding PCMH-type domain. The active site involves Arg-161. The active-site Proton donor is Ser-231. Residue Glu-327 is part of the active site.

The protein belongs to the MurB family. It depends on FAD as a cofactor.

It localises to the cytoplasm. The enzyme catalyses UDP-N-acetyl-alpha-D-muramate + NADP(+) = UDP-N-acetyl-3-O-(1-carboxyvinyl)-alpha-D-glucosamine + NADPH + H(+). It functions in the pathway cell wall biogenesis; peptidoglycan biosynthesis. Functionally, cell wall formation. The sequence is that of UDP-N-acetylenolpyruvoylglucosamine reductase from Shewanella baltica (strain OS195).